The chain runs to 184 residues: Protein GrpE (184 aa).

Residues 1 to 14 (MANEQNEQSQDLSS) are compositionally biased toward polar residues. The tract at residues 1-35 (MANEQNEQSQDLSSEQTTQDHEQTQTEGVEQGAEI) is disordered.

It belongs to the GrpE family. In terms of assembly, homodimer.

The protein resides in the cytoplasm. Participates actively in the response to hyperosmotic and heat shock by preventing the aggregation of stress-denatured proteins, in association with DnaK and GrpE. It is the nucleotide exchange factor for DnaK and may function as a thermosensor. Unfolded proteins bind initially to DnaJ; upon interaction with the DnaJ-bound protein, DnaK hydrolyzes its bound ATP, resulting in the formation of a stable complex. GrpE releases ADP from DnaK; ATP binding to DnaK triggers the release of the substrate protein, thus completing the reaction cycle. Several rounds of ATP-dependent interactions between DnaJ, DnaK and GrpE are required for fully efficient folding. This Acinetobacter baylyi (strain ATCC 33305 / BD413 / ADP1) protein is Protein GrpE.